The following is a 453-amino-acid chain: Tol-Pal system protein TolB (453 aa).

Residues 1-34 form the signal peptide; sequence MYLIIKKTHKLPHWLQKVSLSIMLIIFLWKPALL.

The protein belongs to the TolB family. The Tol-Pal system is composed of five core proteins: the inner membrane proteins TolA, TolQ and TolR, the periplasmic protein TolB and the outer membrane protein Pal. They form a network linking the inner and outer membranes and the peptidoglycan layer.

The protein resides in the periplasm. Part of the Tol-Pal system, which plays a role in outer membrane invagination during cell division and is important for maintaining outer membrane integrity. TolB occupies a key intermediary position in the Tol-Pal system because it communicates directly with both membrane-embedded components, Pal in the outer membrane and TolA in the inner membrane. This chain is Tol-Pal system protein TolB, found in Blochmanniella pennsylvanica (strain BPEN).